A 423-amino-acid polypeptide reads, in one-letter code: Serine--tRNA ligase (423 aa).

231-233 (TGE) lines the L-serine pocket. 262–264 (RQE) provides a ligand contact to ATP. Position 285 (glutamate 285) interacts with L-serine. ATP is bound at residue 349-352 (EISS). Residue serine 385 coordinates L-serine.

This sequence belongs to the class-II aminoacyl-tRNA synthetase family. Type-1 seryl-tRNA synthetase subfamily. Homodimer. The tRNA molecule binds across the dimer.

Its subcellular location is the cytoplasm. It catalyses the reaction tRNA(Ser) + L-serine + ATP = L-seryl-tRNA(Ser) + AMP + diphosphate + H(+). The enzyme catalyses tRNA(Sec) + L-serine + ATP = L-seryl-tRNA(Sec) + AMP + diphosphate + H(+). It functions in the pathway aminoacyl-tRNA biosynthesis; selenocysteinyl-tRNA(Sec) biosynthesis; L-seryl-tRNA(Sec) from L-serine and tRNA(Sec): step 1/1. Catalyzes the attachment of serine to tRNA(Ser). Is also able to aminoacylate tRNA(Sec) with serine, to form the misacylated tRNA L-seryl-tRNA(Sec), which will be further converted into selenocysteinyl-tRNA(Sec). In Phytoplasma mali (strain AT), this protein is Serine--tRNA ligase.